Consider the following 477-residue polypeptide: UDP-N-acetylmuramate--L-alanine ligase (477 aa).

An ATP-binding site is contributed by G117–T123.

This sequence belongs to the MurCDEF family.

The protein localises to the cytoplasm. The enzyme catalyses UDP-N-acetyl-alpha-D-muramate + L-alanine + ATP = UDP-N-acetyl-alpha-D-muramoyl-L-alanine + ADP + phosphate + H(+). Its pathway is cell wall biogenesis; peptidoglycan biosynthesis. Its function is as follows. Cell wall formation. This is UDP-N-acetylmuramate--L-alanine ligase from Phenylobacterium zucineum (strain HLK1).